The sequence spans 828 residues: Beta-galactosidase 13 (828 aa).

Residues methionine 1 to alanine 23 form the signal peptide. Residue asparagine 157 is glycosylated (N-linked (GlcNAc...) asparagine). Glutamate 187 (proton donor) is an active-site residue. N-linked (GlcNAc...) asparagine glycosylation is found at asparagine 198 and asparagine 249. The active-site Nucleophile is glutamate 259. 8 N-linked (GlcNAc...) asparagine glycosylation sites follow: asparagine 260, asparagine 362, asparagine 366, asparagine 392, asparagine 502, asparagine 578, asparagine 586, and asparagine 615. The 83-residue stretch at alanine 746–cysteine 828 folds into the SUEL-type lectin domain.

Belongs to the glycosyl hydrolase 35 family.

The protein resides in the secreted. It localises to the extracellular space. The protein localises to the apoplast. The catalysed reaction is Hydrolysis of terminal non-reducing beta-D-galactose residues in beta-D-galactosides.. The polypeptide is Beta-galactosidase 13 (Oryza sativa subsp. japonica (Rice)).